The primary structure comprises 248 residues: tRNA uridine(34) hydroxylase (248 aa).

The region spanning 127-221 (RGRPLVLLDT…YFEEVGGEGY (95 aa)) is the Rhodanese domain. Catalysis depends on Cys181, which acts as the Cysteine persulfide intermediate.

Belongs to the TrhO family.

The catalysed reaction is uridine(34) in tRNA + AH2 + O2 = 5-hydroxyuridine(34) in tRNA + A + H2O. Catalyzes oxygen-dependent 5-hydroxyuridine (ho5U) modification at position 34 in tRNAs. In Xanthomonas axonopodis pv. citri (strain 306), this protein is tRNA uridine(34) hydroxylase.